We begin with the raw amino-acid sequence, 132 residues long: uncharacterized protein (132 aa).

An HTH merR-type domain is found at methionine 1–leucine 69. Positions glycine 4 to isoleucine 23 form a DNA-binding region, H-T-H motif.

Its subcellular location is the cytoplasm. This is an uncharacterized protein from Pseudomonas aeruginosa (strain ATCC 15692 / DSM 22644 / CIP 104116 / JCM 14847 / LMG 12228 / 1C / PRS 101 / PAO1).